The sequence spans 1066 residues: Bifunctional cytochrome P450/NADPH--P450 reductase (1066 aa).

The tract at residues 1–480 (MAESVPIPEP…LAGNGATSSS (480 aa)) is cytochrome P450. Cys407 contributes to the heme binding site. Positions 481-1066 (THNIKAAANL…NERFATDVFD (586 aa)) are NADPH-P-450 reductase. Residues 500 to 641 (MAIFYGSNSG…DFEAWEDIVL (142 aa)) enclose the Flavodoxin-like domain. Residues 506 to 511 (SNSGTC), 554 to 557 (SYEG), Cys588, and Thr596 each bind FMN. In terms of domain architecture, FAD-binding FR-type spans 676 to 904 (QDVEEALVVA…RASSEAFHLP (229 aa)).

This sequence in the N-terminal section; belongs to the cytochrome P450 family. Requires FAD as cofactor. The cofactor is FMN. Heme is required as a cofactor.

It localises to the membrane. The catalysed reaction is an organic molecule + reduced [NADPH--hemoprotein reductase] + O2 = an alcohol + oxidized [NADPH--hemoprotein reductase] + H2O + H(+). It catalyses the reaction 2 oxidized [cytochrome P450] + NADPH = 2 reduced [cytochrome P450] + NADP(+) + H(+). Stimulated NADPH--cytochrome reductase activity in the presence of substrate. Inhibited by fatty acid substrates longer than 13 carbons and the degree of inhibition increases with increasing chain length. Functionally, functions as a fatty acid monooxygenase. Catalyzes hydroxylation of fatty acids at omega-1, omega-2 and omega-3 positions. Shows activity toward fatty acids with a chain length of 9-18 carbons with optimum chain lengths of 12-14 carbons (lauric, tridecylic and myristic acids). Can also use shorter saturated fatty acids with a chain length of 9 or 10 carbons as substrates. Also displays a NADPH-dependent reductase activity in the C-terminal domain, which allows electron transfer from NADPH to the heme iron of the cytochrome P450 N-terminal domain. The sequence is that of Bifunctional cytochrome P450/NADPH--P450 reductase from Fusarium oxysporum (Fusarium vascular wilt).